A 240-amino-acid polypeptide reads, in one-letter code: MPLTEHLRELRYRLIISIIAFLIGSGIAFYFAKYVFEILKEPILKSYPEVELITLSPTEPLFILIKISLAVGFIIASPVILYQFWRFIEPALYSHEKRAFIPLLLGSILLFMLGALFAYFIVLPLALKFLLGLGFTQLLATPYLSVDMYISFVLKLVVAFGIAFEMPIVLYVLQKAGVITPEQLASFRKYFIVIAFVIGAIIAPDVSTQVLMAIPLLLLYEISIFLGKLATRKKKEIQKA.

6 consecutive transmembrane segments (helical) span residues 15–35 (IISI…AKYV), 61–81 (LFIL…PVIL), 103–123 (LLLG…FIVL), 152–172 (FVLK…VLYV), 191–211 (FIVI…TQVL), and 212–232 (MAIP…LATR).

Belongs to the TatC family. As to quaternary structure, forms a complex with TatA.

The protein localises to the cell inner membrane. In terms of biological role, part of the twin-arginine translocation (Tat) system that transports large folded proteins containing a characteristic twin-arginine motif in their signal peptide across membranes. The polypeptide is Sec-independent protein translocase protein TatC (Aquifex aeolicus (strain VF5)).